A 364-amino-acid polypeptide reads, in one-letter code: DNA polymerase IV (364 aa).

The UmuC domain maps to 14–198 (IIHIDMDAFF…LPIEKFHGVG (185 aa)). 2 residues coordinate Mg(2+): D18 and D116. E117 is a catalytic residue.

The protein belongs to the DNA polymerase type-Y family. As to quaternary structure, monomer. Mg(2+) serves as cofactor.

The protein localises to the cytoplasm. The enzyme catalyses DNA(n) + a 2'-deoxyribonucleoside 5'-triphosphate = DNA(n+1) + diphosphate. Functionally, poorly processive, error-prone DNA polymerase involved in untargeted mutagenesis. Copies undamaged DNA at stalled replication forks, which arise in vivo from mismatched or misaligned primer ends. These misaligned primers can be extended by PolIV. Exhibits no 3'-5' exonuclease (proofreading) activity. May be involved in translesional synthesis, in conjunction with the beta clamp from PolIII. The polypeptide is DNA polymerase IV (Streptococcus pyogenes serotype M5 (strain Manfredo)).